The primary structure comprises 361 residues: Chorismate synthase (361 aa).

Residues arginine 48 and arginine 54 each coordinate NADP(+). Residues 125-127 (RSS), 238-239 (NA), glycine 278, 293-297 (KPTSS), and arginine 319 contribute to the FMN site.

The protein belongs to the chorismate synthase family. In terms of assembly, homotetramer. Requires FMNH2 as cofactor.

It catalyses the reaction 5-O-(1-carboxyvinyl)-3-phosphoshikimate = chorismate + phosphate. It functions in the pathway metabolic intermediate biosynthesis; chorismate biosynthesis; chorismate from D-erythrose 4-phosphate and phosphoenolpyruvate: step 7/7. Catalyzes the anti-1,4-elimination of the C-3 phosphate and the C-6 proR hydrogen from 5-enolpyruvylshikimate-3-phosphate (EPSP) to yield chorismate, which is the branch point compound that serves as the starting substrate for the three terminal pathways of aromatic amino acid biosynthesis. This reaction introduces a second double bond into the aromatic ring system. The sequence is that of Chorismate synthase from Proteus mirabilis (strain HI4320).